A 350-amino-acid polypeptide reads, in one-letter code: Small ribosomal subunit biogenesis GTPase RsgA (350 aa).

The segment at 1 to 30 is disordered; the sequence is MSKRKLTQNQQRRIQSNNAKTLHRHQHRHK. Positions 7–20 are enriched in polar residues; that stretch reads TQNQQRRIQSNNAK. Over residues 21–30 the composition is skewed to basic residues; that stretch reads TLHRHQHRHK. The CP-type G domain maps to 106–274; sequence HNQIVRPDYY…LIDSPGIREF (169 aa). GTP contacts are provided by residues 162–165 and 216–224; these read NKAD and GQSGVGKSS. Zn(2+)-binding residues include Cys-298, Cys-303, His-305, and Cys-311.

Belongs to the TRAFAC class YlqF/YawG GTPase family. RsgA subfamily. In terms of assembly, monomer. Associates with 30S ribosomal subunit, binds 16S rRNA. It depends on Zn(2+) as a cofactor.

It is found in the cytoplasm. Its function is as follows. One of several proteins that assist in the late maturation steps of the functional core of the 30S ribosomal subunit. Helps release RbfA from mature subunits. May play a role in the assembly of ribosomal proteins into the subunit. Circularly permuted GTPase that catalyzes slow GTP hydrolysis, GTPase activity is stimulated by the 30S ribosomal subunit. The chain is Small ribosomal subunit biogenesis GTPase RsgA from Histophilus somni (strain 129Pt) (Haemophilus somnus).